The sequence spans 439 residues: GTPase Der (439 aa).

2 EngA-type G domains span residues 4–168 (PIVA…KDDE) and 177–352 (INIA…DNYN). Residues 10–17 (GRPNVGKS), 57–61 (DTGGI), 120–123 (NKID), 183–190 (GKPNVGKS), 230–234 (DTAGL), and 295–298 (NKWD) contribute to the GTP site. One can recognise a KH-like domain in the interval 353–437 (KRVKTGVLND…GIKSEFRERK (85 aa)).

The protein belongs to the TRAFAC class TrmE-Era-EngA-EngB-Septin-like GTPase superfamily. EngA (Der) GTPase family. In terms of assembly, associates with the 50S ribosomal subunit.

GTPase that plays an essential role in the late steps of ribosome biogenesis. In Clostridium botulinum (strain ATCC 19397 / Type A), this protein is GTPase Der.